We begin with the raw amino-acid sequence, 318 residues long: Ethyl acetate hydrolase (318 aa).

Residues S165, D261, and H291 contribute to the active site.

It belongs to the 'GDXG' lipolytic enzyme family. As to quaternary structure, monomer.

The protein resides in the cytoplasm. The enzyme catalyses ethyl acetate + H2O = ethanol + acetate + H(+). Its activity is regulated as follows. Inhibited by the serine protease inhibitor phenylmethylsulfonyl fluoride, the histidine reagent diethylpyrocarbonate and two sulfhydryl reagents, mercuric chloride and naphthol AS-D chloroacetate. Not inhibited by EDTA. Its function is as follows. Esterase that catalyzes the hydrolysis of ethyl acetate. Can also use propyl acetate and the chromogenic substrates alpha-naphthyl acetate, alpha-naphthyl propionate, alpha-naphthyl caproate and 4-nitrophenyl acetate, with a preference for short-chain aliphatic esters. Highest activity is obtained in vitro with propyl acetate, followed by ethyl acetate. In vivo, could be involved in pyoverdine biosynthesis, but its specific role and its in vivo substrate have not been identified. The protein is Ethyl acetate hydrolase of Pseudomonas putida (Arthrobacter siderocapsulatus).